Consider the following 392-residue polypeptide: Formate-dependent phosphoribosylglycinamide formyltransferase (392 aa).

Residues 22-23 and glutamate 82 contribute to the N(1)-(5-phospho-beta-D-ribosyl)glycinamide site; that span reads EL. ATP is bound by residues arginine 114, lysine 155, 160–165, 195–198, and glutamate 203; these read SSGKGQ and EGVV. The ATP-grasp domain maps to 119–308; sequence RLAAEELGLP…EFALHVRAFL (190 aa). Mg(2+)-binding residues include glutamate 267 and glutamate 279. Residues aspartate 286, lysine 355, and 362-363 contribute to the N(1)-(5-phospho-beta-D-ribosyl)glycinamide site; that span reads RR.

This sequence belongs to the PurK/PurT family. As to quaternary structure, homodimer.

The catalysed reaction is N(1)-(5-phospho-beta-D-ribosyl)glycinamide + formate + ATP = N(2)-formyl-N(1)-(5-phospho-beta-D-ribosyl)glycinamide + ADP + phosphate + H(+). It participates in purine metabolism; IMP biosynthesis via de novo pathway; N(2)-formyl-N(1)-(5-phospho-D-ribosyl)glycinamide from N(1)-(5-phospho-D-ribosyl)glycinamide (formate route): step 1/1. In terms of biological role, involved in the de novo purine biosynthesis. Catalyzes the transfer of formate to 5-phospho-ribosyl-glycinamide (GAR), producing 5-phospho-ribosyl-N-formylglycinamide (FGAR). Formate is provided by PurU via hydrolysis of 10-formyl-tetrahydrofolate. This chain is Formate-dependent phosphoribosylglycinamide formyltransferase, found in Cronobacter sakazakii (strain ATCC BAA-894) (Enterobacter sakazakii).